The chain runs to 1333 residues: Elongator complex protein 1 (1333 aa).

A phosphoserine mark is found at S805, S868, S1172, and S1175. Residues 886-1333 (VDVNELYDHS…KTQWKLSLLE (448 aa)) form a mediates dimerization region. The disordered stretch occupies residues 1177-1209 (SEMSSKYSHSNSRISARSSKNRRKAERKKHSLK). Positions 1192 to 1210 (ARSSKNRRKAERKKHSLKE) are required for binding to tRNA. The segment covering 1195-1207 (SKNRRKAERKKHS) has biased composition (basic residues).

The protein belongs to the ELP1/IKA1 family. Homodimer; dimerization promotes ELP1 stability and elongator complex formation. Component of the elongator complex which consists of ELP1, ELP2, ELP3, ELP4, ELP5 and ELP6. Interacts preferentially with MAP3K14/NIK followed by IKK-alpha and IKK-beta. Phosphorylated.

It is found in the cytoplasm. The protein resides in the nucleus. Its pathway is tRNA modification; 5-methoxycarbonylmethyl-2-thiouridine-tRNA biosynthesis. Its function is as follows. Component of the elongator complex which is required for multiple tRNA modifications, including mcm5U (5-methoxycarbonylmethyl uridine), mcm5s2U (5-methoxycarbonylmethyl-2-thiouridine), and ncm5U (5-carbamoylmethyl uridine). The elongator complex catalyzes the formation of carboxymethyluridine in the wobble base at position 34 in tRNAs. Regulates the migration and branching of projection neurons in the developing cerebral cortex, through a process depending on alpha-tubulin acetylation. ELP1 binds to tRNA, mediating interaction of the elongator complex with tRNA. May act as a scaffold protein that assembles active IKK-MAP3K14 complexes (IKKA, IKKB and MAP3K14/NIK). The sequence is that of Elongator complex protein 1 (ELP1) from Oryctolagus cuniculus (Rabbit).